A 448-amino-acid polypeptide reads, in one-letter code: FAD-linked oxidoreductase nodO (448 aa).

The 172-residue stretch at 35–206 (PEHFPLAIVK…IRFFLKTCPL (172 aa)) folds into the FAD-binding PCMH-type domain.

This sequence belongs to the oxygen-dependent FAD-linked oxidoreductase family. The cofactor is FAD.

It functions in the pathway secondary metabolite biosynthesis. In terms of biological role, FAD-linked oxidoreductase; part of the gene cluster that mediates the biosynthesis of the indole diterpenes nodulisporic acids (NA). Nodulisporic acid A (NAA) and its chemically modified derivatives are of particular significance because of their highly potent insecticidal activity against blood-feeding arthropods and lack of observable adverse effects on mammals, in particular the tremogenicity associated with the paspaline-derived IDTs is not observed. The geranylgeranyl diphosphate (GGPP) synthase ggs1, localized outside of the cluster, is proposed to catalyze the first step in nodulisporic acid biosynthesis via conversion of farnesyl pyrophosphate and isopentyl pyrophosphate into geranylgeranyl pyrophosphate (GGPP). Condensation of indole-3-glycerol phosphate with GGPP by the prenyl transferase nodC then forms 3-geranylgeranylindole (3-GGI). Epoxidation by the FAD-dependent monooxygenase nodM leads to a single-epoxidized-GGI that is substrate of the terpene cyclase nodB for cyclization to yield emindole SB. The terminal methyl carbon, C28, of emindole SB is then oxidized by the cytochrome P450 monooxygenase nodW to produce nodulisporic acid F (NAF), the pentacyclic core of NAA. NAF is converted to nodulisporic acid E (NAE) via prenylation. This step is probably performed by one of the indole diterpene prenyltransferases nodD1 or nodD2. Several oxidation steps performed by the FAD-linked oxidoreductase nodO and one of the cytochrome P450 monooxygenase nodR, nodX or nodZ further convert NAE to nodulisporic acid D (NAD). NAD is substrate of cytochrome P450 monooxygenase nodJ to produce the precursor of nodulisporic acid C (NAC), converted to NAC by one of the indole diterpene prenyltransferases nodD1 or nodD2. The FAD-dependent monooxygenase nodY2 then oxidizes NAC to nodulisporic acid B (NAB). Finally NAB is converted to NAA by one of the cytochrome P450 monooxygenases nodR, nodX or nodZ. In Hypoxylon pulicicidum, this protein is FAD-linked oxidoreductase nodO.